The primary structure comprises 449 residues: Chromosomal replication initiator protein DnaA (449 aa).

Residues 1 to 75 form a domain I, interacts with DnaA modulators region; it reads MDTNNDIEKR…EILSQNKVGM (75 aa). The domain II stretch occupies residues 75–106; sequence MHLAHSVDVRIEVASKVHVSDHSNINYKATKS. The domain III, AAA+ region stretch occupies residues 107–321; sequence SIKDSYTFEN…GAIIKISVNA (215 aa). Residues Gly-151, Gly-153, Lys-154, and Thr-155 each coordinate ATP. Positions 322 to 449 are domain IV, binds dsDNA; that stretch reads NLMNAPIDLN…LNELNDKKQH (128 aa).

Belongs to the DnaA family. In terms of assembly, oligomerizes as a right-handed, spiral filament on DNA at oriC.

The protein localises to the cytoplasm. Functionally, plays an essential role in the initiation and regulation of chromosomal replication. ATP-DnaA binds to the origin of replication (oriC) to initiate formation of the DNA replication initiation complex once per cell cycle. Binds the DnaA box (a 9 base pair repeat at the origin) and separates the double-stranded (ds)DNA. Forms a right-handed helical filament on oriC DNA; dsDNA binds to the exterior of the filament while single-stranded (ss)DNA is stabiized in the filament's interior. The ATP-DnaA-oriC complex binds and stabilizes one strand of the AT-rich DNA unwinding element (DUE), permitting loading of DNA polymerase. After initiation quickly degrades to an ADP-DnaA complex that is not apt for DNA replication. Binds acidic phospholipids. This Helicobacter acinonychis (strain Sheeba) protein is Chromosomal replication initiator protein DnaA.